The chain runs to 748 residues: Acyl-coenzyme A oxidase (748 aa).

It belongs to the acyl-CoA oxidase family. The cofactor is FAD.

It localises to the peroxisome. The catalysed reaction is a 2,3-saturated acyl-CoA + O2 = a (2E)-enoyl-CoA + H2O2. It functions in the pathway lipid metabolism; peroxisomal fatty acid beta-oxidation. The polypeptide is Acyl-coenzyme A oxidase (POX1) (Candida glabrata (strain ATCC 2001 / BCRC 20586 / JCM 3761 / NBRC 0622 / NRRL Y-65 / CBS 138) (Yeast)).